Consider the following 216-residue polypeptide: Invasion protein InvF (216 aa).

Positions 112-210 (YWLVGYLLAQ…GVSPRKLSNI (99 aa)) constitute an HTH araC/xylS-type domain. DNA-binding regions (H-T-H motif) lie at residues 129–150 (RMLG…SRAL) and 177–200 (ITQL…KELI).

Functionally, transcriptional regulator required for the expression of several genes encoding type III secretion system SPI1 effector proteins. The interaction with SicA is necessary for the activation of sigDE (sopB pipC), sicAsipBCDA, and sopE. This chain is Invasion protein InvF (invF), found in Salmonella typhi.